Consider the following 184-residue polypeptide: Guanylate kinase (184 aa).

In terms of domain architecture, Guanylate kinase-like spans 5–183 (KKLIILTGPS…TAKRIIKLIQ (179 aa)). Residue 12-19 (GPSGVGKG) coordinates ATP.

The protein belongs to the guanylate kinase family.

The protein resides in the cytoplasm. The enzyme catalyses GMP + ATP = GDP + ADP. In terms of biological role, essential for recycling GMP and indirectly, cGMP. The sequence is that of Guanylate kinase from Prochlorococcus marinus (strain MIT 9312).